The sequence spans 600 residues: DDB1- and CUL4-associated factor 8-like protein 1 (600 aa).

Residues 1–122 are disordered; sequence MSHQEGSTGG…EEEQPRMCPR (122 aa). Acidic residues-rich tracts occupy residues 74–83 and 96–115; these read SSSEDVELES and EETE…EEEE. WD repeat units lie at residues 194-233, 237-278, 284-324, 332-372, 388-427, 435-475, and 479-518; these read SHAG…PVLN, GHDI…YCEN, KHRG…PASK, DKKV…KKEN, DFPT…GAQY, RNND…IIQF, and DRGD…ATEL. Residues 562-600 are disordered; that stretch reads PGWRDHGAEFPDEEELDESSSTSDTSEEEGQDRVQCIPS.

Belongs to the WD repeat DCAF8 family.

This Homo sapiens (Human) protein is DDB1- and CUL4-associated factor 8-like protein 1 (DCAF8L1).